A 249-amino-acid polypeptide reads, in one-letter code: Ubiquinone biosynthesis O-methyltransferase (249 aa).

S-adenosyl-L-methionine-binding residues include Arg41, Gly72, Asp93, and Met136.

Belongs to the methyltransferase superfamily. UbiG/COQ3 family.

The enzyme catalyses a 3-demethylubiquinol + S-adenosyl-L-methionine = a ubiquinol + S-adenosyl-L-homocysteine + H(+). The catalysed reaction is a 3-(all-trans-polyprenyl)benzene-1,2-diol + S-adenosyl-L-methionine = a 2-methoxy-6-(all-trans-polyprenyl)phenol + S-adenosyl-L-homocysteine + H(+). Its pathway is cofactor biosynthesis; ubiquinone biosynthesis. Functionally, O-methyltransferase that catalyzes the 2 O-methylation steps in the ubiquinone biosynthetic pathway. The protein is Ubiquinone biosynthesis O-methyltransferase of Mesorhizobium japonicum (strain LMG 29417 / CECT 9101 / MAFF 303099) (Mesorhizobium loti (strain MAFF 303099)).